We begin with the raw amino-acid sequence, 183 residues long: uncharacterized protein (183 aa).

4 consecutive transmembrane segments (helical) span residues 26 to 48 (FVAI…IIFY), 72 to 91 (LLVR…KVFI), 104 to 121 (IIEA…LIVF), and 125 to 147 (FTFW…YVLL).

The protein resides in the cell membrane. This is an uncharacterized protein from Aquifex aeolicus (strain VF5).